The following is a 338-amino-acid chain: DNA fragmentation factor subunit beta (338 aa).

The 77-residue stretch at 4-80 folds into the CIDE-N domain; that stretch reads KPKSVKLRAL…LLTLGQAWQG (77 aa).

As to quaternary structure, heterodimer of DFFA and DFFB. Interacts with H1-1.

It localises to the cytoplasm. Its subcellular location is the nucleus. With respect to regulation, inhibited by DFFA (DFF45). Its function is as follows. Nuclease that induces DNA fragmentation and chromatin condensation during apoptosis. Degrades naked DNA and induces apoptotic morphology. The sequence is that of DNA fragmentation factor subunit beta (DFFB) from Homo sapiens (Human).